The sequence spans 219 residues: uncharacterized protein (219 aa).

This sequence belongs to the CIA30 family.

Its subcellular location is the cytoplasm. It localises to the nucleus. This is an uncharacterized protein from Schizosaccharomyces pombe (strain 972 / ATCC 24843) (Fission yeast).